Reading from the N-terminus, the 187-residue chain is Ribose 1,5-bisphosphate phosphokinase PhnN (187 aa).

9 to 16 contacts ATP; sequence GPSGSGKD.

This sequence belongs to the ribose 1,5-bisphosphokinase family.

The catalysed reaction is alpha-D-ribose 1,5-bisphosphate + ATP = 5-phospho-alpha-D-ribose 1-diphosphate + ADP. It participates in metabolic intermediate biosynthesis; 5-phospho-alpha-D-ribose 1-diphosphate biosynthesis; 5-phospho-alpha-D-ribose 1-diphosphate from D-ribose 5-phosphate (route II): step 3/3. Functionally, catalyzes the phosphorylation of ribose 1,5-bisphosphate to 5-phospho-D-ribosyl alpha-1-diphosphate (PRPP). This Desulfomicrobium baculatum (strain DSM 4028 / VKM B-1378 / X) (Desulfovibrio baculatus) protein is Ribose 1,5-bisphosphate phosphokinase PhnN.